A 1056-amino-acid polypeptide reads, in one-letter code: Multidrug resistance protein MdtB (1056 aa).

Transmembrane regions (helical) follow at residues 16–36 (FILR…AGII), 342–362 (DVQF…YVFL), 373–393 (IAVP…GFSV), 396–416 (LTLM…IVVI), 440–460 (IGFT…PLLF), 472–492 (FAIT…TLTP), 537–557 (WITL…YLTI), 869–889 (LILA…ESFI), 890–910 (HPVT…LALM), 911–931 (VGGY…IGIV), 968–988 (ILMT…STGI), and 1002–1022 (GGLI…YLLF). The tract at residues 1037-1056 (LQSQNQRELDHSPVNHQEPL) is disordered. Over residues 1043–1056 (RELDHSPVNHQEPL) the composition is skewed to basic and acidic residues.

The protein belongs to the resistance-nodulation-cell division (RND) (TC 2.A.6) family. MdtB subfamily. In terms of assembly, part of a tripartite efflux system composed of MdtA, MdtB and MdtC. MdtB forms a heteromultimer with MdtC.

Its subcellular location is the cell inner membrane. This is Multidrug resistance protein MdtB from Xenorhabdus bovienii (strain SS-2004) (Xenorhabdus nematophila subsp. bovienii).